We begin with the raw amino-acid sequence, 92 residues long: Small ribosomal subunit protein uS17 (92 aa).

This sequence belongs to the universal ribosomal protein uS17 family. In terms of assembly, part of the 30S ribosomal subunit.

In terms of biological role, one of the primary rRNA binding proteins, it binds specifically to the 5'-end of 16S ribosomal RNA. This is Small ribosomal subunit protein uS17 from Corynebacterium glutamicum (strain ATCC 13032 / DSM 20300 / JCM 1318 / BCRC 11384 / CCUG 27702 / LMG 3730 / NBRC 12168 / NCIMB 10025 / NRRL B-2784 / 534).